A 264-amino-acid chain; its full sequence is Electron transfer flavoprotein subunit beta (264 aa).

Residues Ala-6, 36-39 (NEWD), Val-64, 119-122 (GVQS), and 127-130 (YAST) contribute to the AMP site.

As to quaternary structure, heterodimer of an alpha and a beta subunit. Forms a ternary complex with trimethylamine dehydrogenase.

Functionally, heterodimeric electron transfer flavoprotein that accepts electrons from trimethylamine dehydrogenase. It transfers the electrons to the main respiratory chain via ETF-ubiquinone oxidoreductase (ETF dehydrogenase). EtfB binds an AMP molecule that probably has a purely structural role. The polypeptide is Electron transfer flavoprotein subunit beta (etfB) (Methylophilus methylotrophus (Bacterium W3A1)).